Here is a 234-residue protein sequence, read N- to C-terminus: Peptidase E (234 aa).

Catalysis depends on charge relay system residues Ser-123, Asp-138, and His-160.

Belongs to the peptidase S51 family.

The protein localises to the cytoplasm. It carries out the reaction Dipeptidase E catalyzes the hydrolysis of dipeptides Asp-|-Xaa. It does not act on peptides with N-terminal Glu, Asn or Gln, nor does it cleave isoaspartyl peptides.. Hydrolyzes dipeptides containing N-terminal aspartate residues. May play a role in allowing the cell to use peptide aspartate to spare carbon otherwise required for the synthesis of the aspartate family of amino acids. This chain is Peptidase E, found in Actinobacillus pleuropneumoniae serotype 5b (strain L20).